Reading from the N-terminus, the 71-residue chain is Paralithocin 2 (71 aa).

An N-terminal signal peptide occupies residues 1 to 23 (MGAAKVLLVVLAVMVAVPNLAEG). Cystine bridges form between Cys29–Cys58, Cys34–Cys54, Cys39–Cys52, and Cys44–Cys55. Arginine amide; partial is present on Arg70.

This sequence belongs to the paralithocin family. Post-translationally, the amidated form is probably the active form.

In terms of biological role, has antibacterial activity, mainly against marine Gram-positive bacteria like C.maltaromaticum (MIC=50 uM), C.mobile (MIC=50 uM), C.divergens (MIC=50 uM) and C.funditum (MIC=25 uM) but also against C.glutamicum (MIC=12.5 uM). Has very little or no activity against Gram-negative bacteria. The protein is Paralithocin 2 of Paralithodes camtschaticus (Red king crab).